The following is a 178-amino-acid chain: CASP-like protein 5A1 (178 aa).

The segment covering 1-11 (MFASRPAVHPV) has biased composition (low complexity). The segment at 1–25 (MFASRPAVHPVEAPPPPDPAEQPRG) is disordered. The Cytoplasmic portion of the chain corresponds to 1–37 (MFASRPAVHPVEAPPPPDPAEQPRGVLMKDLPGMPGT). A helical transmembrane segment spans residues 38-58 (AGGLGLRLAQFAFAAVALAVM). At 59–69 (ASTNDFPSVTS) the chain is on the extracellular side. Residues 70–90 (FCFLVAAAILQCLWSFSLAIV) form a helical membrane-spanning segment. Residues 91 to 105 (DIYALLVKRCLRNRR) are Cytoplasmic-facing. The helical transmembrane segment at 106–126 (AVCLFAIGDGITAALTFSAAC) threads the bilayer. The Extracellular segment spans residues 127–152 (ASSGITVLIDNDLDLCSENHCASFES). Residues 153–173 (ATAMAFLSWFALSPSFLLNFW) traverse the membrane as a helical segment. Residues 174 to 178 (SMASG) lie on the Cytoplasmic side of the membrane.

This sequence belongs to the Casparian strip membrane proteins (CASP) family. In terms of assembly, homodimer and heterodimers.

The protein resides in the cell membrane. The protein is CASP-like protein 5A1 of Oryza sativa subsp. japonica (Rice).